Here is an 86-residue protein sequence, read N- to C-terminus: Large ribosomal subunit protein uL23 (86 aa).

It belongs to the universal ribosomal protein uL23 family. In terms of assembly, part of the 50S ribosomal subunit. Contacts protein L29.

In terms of biological role, binds to 23S rRNA. One of the proteins that surrounds the polypeptide exit tunnel on the outside of the ribosome. The polypeptide is Large ribosomal subunit protein uL23 (Pyrococcus furiosus (strain ATCC 43587 / DSM 3638 / JCM 8422 / Vc1)).